A 522-amino-acid chain; its full sequence is MSFSRSAADAADTLPDLAATLGAPALGAFVTLGDAFHTRLPAAPLPAPYVVGCSDEVAQLLGLPASFATQPGFAELFAGNPTRDWPAHALPYASVYSGHQFGVWAGQLGDGRALTIGELPGTDGRRYELQIKGGGRTPYSRMGDGRAVLRSSIREFLCSEAMHHLGIPTTRALTVIGSDQPVVREEIETSAVVTRVSESFVRFGHFEHFFSNDRPDLLRQLADHVIDRFYPACREADDPYLALLEAATLRTADLVAQWQAVGFCHGVMNTDNMSILGLTIDYGPFGFVDAFDANHICNHSDTSGRYAYRMQPRIAHWNCYCLAQALLPLIGLQHGIADDDARAERAVDDAQAVLAKFPERFGPALERAMRAKLGLELERENDAELANKLLETMHASHADFTLTFRRLAQLSKHDASRDAPVRDLFIDRDAFDAWANLYRERLSEETRDDAARAAAMNRVNPKYVLRNHLAEVAIRRAKEKDFSEVERLAQVLRRPFDEQPEHEAYAALPPDWAGSLEVSCSS.

ATP-binding residues include glycine 109, glycine 111, arginine 112, lysine 132, aspartate 144, glycine 145, arginine 195, and arginine 202. Aspartate 271 functions as the Proton acceptor in the catalytic mechanism. Mg(2+)-binding residues include asparagine 272 and aspartate 281. Residue aspartate 281 participates in ATP binding.

Belongs to the SELO family. Requires Mg(2+) as cofactor. Mn(2+) serves as cofactor.

The enzyme catalyses L-seryl-[protein] + ATP = 3-O-(5'-adenylyl)-L-seryl-[protein] + diphosphate. It catalyses the reaction L-threonyl-[protein] + ATP = 3-O-(5'-adenylyl)-L-threonyl-[protein] + diphosphate. It carries out the reaction L-tyrosyl-[protein] + ATP = O-(5'-adenylyl)-L-tyrosyl-[protein] + diphosphate. The catalysed reaction is L-histidyl-[protein] + UTP = N(tele)-(5'-uridylyl)-L-histidyl-[protein] + diphosphate. The enzyme catalyses L-seryl-[protein] + UTP = O-(5'-uridylyl)-L-seryl-[protein] + diphosphate. It catalyses the reaction L-tyrosyl-[protein] + UTP = O-(5'-uridylyl)-L-tyrosyl-[protein] + diphosphate. Functionally, nucleotidyltransferase involved in the post-translational modification of proteins. It can catalyze the addition of adenosine monophosphate (AMP) or uridine monophosphate (UMP) to a protein, resulting in modifications known as AMPylation and UMPylation. The chain is Protein nucleotidyltransferase YdiU from Burkholderia ambifaria (strain ATCC BAA-244 / DSM 16087 / CCUG 44356 / LMG 19182 / AMMD) (Burkholderia cepacia (strain AMMD)).